Reading from the N-terminus, the 122-residue chain is Large ribosomal subunit protein bL12 (122 aa).

Belongs to the bacterial ribosomal protein bL12 family. Homodimer. Part of the ribosomal stalk of the 50S ribosomal subunit. Forms a multimeric L10(L12)X complex, where L10 forms an elongated spine to which 2 to 4 L12 dimers bind in a sequential fashion. Binds GTP-bound translation factors.

In terms of biological role, forms part of the ribosomal stalk which helps the ribosome interact with GTP-bound translation factors. Is thus essential for accurate translation. The polypeptide is Large ribosomal subunit protein bL12 (Shewanella putrefaciens (strain CN-32 / ATCC BAA-453)).